Here is a 655-residue protein sequence, read N- to C-terminus: Inactive serine protease scarface (655 aa).

The N-terminal stretch at 1–24 (MSASHFREQLALCITLAVLAAASG) is a signal peptide. Composition is skewed to polar residues over residues 213 to 225 (TQAP…TTAV) and 237 to 252 (PSTT…QTSR). Positions 213 to 319 (TQAPFRPQPT…QPSNQKPIYR (107 aa)) are disordered. The segment at 343 to 407 (KCASALVCTS…PNYVDPWPVN (65 aa)) is CLIP. 7 cysteine pairs are disulfide-bonded: Cys344-Cys394, Cys350-Cys383, Cys356-Cys395, Cys450-Cys466, Cys547-Cys605, Cys579-Cys587, and Cys595-Cys623. Residues 421 to 644 (PTGVKDLDAN…DIKWINTAFA (224 aa)) form the Peptidase S1 domain.

Belongs to the peptidase S1 family.

It is found in the secreted. Inactive serine protease that plays a role in germ-band retraction and dorsal closure morphogenesis in embryogenesis; contributes to amnioserosa attachment and epithelial apico-basal polarity by regulating the localization of laminin LanA on the apical side of the amnioserosa epithelium. Contributes to epithelial morphogenesis probably by regulating the bsk/JNK pathway, as part of a negative-feedback loop, and by modulating the cross-talk between the Egfr, bsk/JNK and dpp signal transduction pathways. In larval development, antagonizes the morphogenetic movements controlled by the bsk/JNK signaling including male genitalia formation and thorax development. This is Inactive serine protease scarface from Drosophila melanogaster (Fruit fly).